A 308-amino-acid chain; its full sequence is Probable manganese-dependent inorganic pyrophosphatase (308 aa).

6 residues coordinate Mn(2+): His9, Asp13, Asp15, Asp75, His97, and Asp149.

Belongs to the PPase class C family. Requires Mn(2+) as cofactor.

Its subcellular location is the cytoplasm. It carries out the reaction diphosphate + H2O = 2 phosphate + H(+). The chain is Probable manganese-dependent inorganic pyrophosphatase from Enterococcus faecalis (strain ATCC 700802 / V583).